A 177-amino-acid chain; its full sequence is Large ribosomal subunit protein uL6 (177 aa).

The protein belongs to the universal ribosomal protein uL6 family. In terms of assembly, part of the 50S ribosomal subunit.

Its function is as follows. This protein binds to the 23S rRNA, and is important in its secondary structure. It is located near the subunit interface in the base of the L7/L12 stalk, and near the tRNA binding site of the peptidyltransferase center. This Shewanella frigidimarina (strain NCIMB 400) protein is Large ribosomal subunit protein uL6.